The following is a 145-amino-acid chain: Large ribosomal subunit protein uL13 (145 aa).

The protein belongs to the universal ribosomal protein uL13 family. Part of the 50S ribosomal subunit.

Functionally, this protein is one of the early assembly proteins of the 50S ribosomal subunit, although it is not seen to bind rRNA by itself. It is important during the early stages of 50S assembly. The protein is Large ribosomal subunit protein uL13 of Exiguobacterium sibiricum (strain DSM 17290 / CCUG 55495 / CIP 109462 / JCM 13490 / 255-15).